Consider the following 273-residue polypeptide: Kit ligand (273 aa).

The signal sequence occupies residues 1-25; the sequence is MKKTQTWILTCIYLQLLLFNPLVKT. The Extracellular segment spans residues 26–214; that stretch reads EGICRNRVTN…KNPPGDSSLH (189 aa). Intrachain disulfides connect Cys29/Cys114 and Cys68/Cys163. N-linked (GlcNAc...) asparagine; partial glycans are attached at residues Asn90 and Asn118. The N-linked (GlcNAc...) asparagine glycan is linked to Asn145. Ser167 is a glycosylation site (O-linked (GalNAc...) serine). O-linked (GalNAc...) threonine glycans are attached at residues Thr168 and Thr180. Asn195 is a glycosylation site (N-linked (GlcNAc...) asparagine). Residues 215–237 traverse the membrane as a helical segment; the sequence is WAAMALPALFSLIIGFAFGALYW. Residues 238–273 lie on the Cytoplasmic side of the membrane; it reads KKRQPSLTRAVENIQINEEDNEISMLQEKEREFQEV.

It belongs to the SCF family. Homodimer, non-covalently linked. Heterotetramer with KIT, binding two KIT molecules; thereby mediates KIT dimerization and subsequent activation by autophosphorylation. A soluble form (sKITLG) is produced by proteolytic processing of isoform 1 in the extracellular domain. Post-translationally, found in two differentially glycosylated forms, LMW-SCF and HMW-SCF. LMW-SCF is fully N-glycosylated at Asn-145, partially N-glycosylated at Asn-90, O-glycosylated at Ser-167, Thr-168 and Thr-180, and not glycosylated at Asn-97 or Asn-118. HMW-SCF is N-glycosylated at Asn-118, Asn-90 and Asn-145, O-glycosylated at Ser-167, Thr-168 and Thr-180, and not glycosylated at Asn-97. In terms of processing, a soluble form exists as a cleavage product of the extracellular domain.

The protein localises to the cell membrane. It localises to the cytoplasm. Its subcellular location is the cytoskeleton. It is found in the cell projection. The protein resides in the lamellipodium. The protein localises to the filopodium. It localises to the secreted. Functionally, ligand for the receptor-type protein-tyrosine kinase KIT. Plays an essential role in the regulation of cell survival and proliferation, hematopoiesis, stem cell maintenance, gametogenesis, mast cell development, migration and function, and in melanogenesis. KITLG/SCF binding can activate several signaling pathways. Promotes phosphorylation of PIK3R1, the regulatory subunit of phosphatidylinositol 3-kinase, and subsequent activation of the kinase AKT1. KITLG/SCF and KIT also transmit signals via GRB2 and activation of RAS, RAF1 and the MAP kinases MAPK1/ERK2 and/or MAPK3/ERK1. KITLG/SCF and KIT promote activation of STAT family members STAT1, STAT3 and STAT5. KITLG/SCF and KIT promote activation of PLCG1, leading to the production of the cellular signaling molecules diacylglycerol and inositol 1,4,5-trisphosphate. KITLG/SCF acts synergistically with other cytokines, probably interleukins. The polypeptide is Kit ligand (Homo sapiens (Human)).